A 349-amino-acid chain; its full sequence is Ribosomal RNA small subunit methyltransferase C (349 aa).

The protein belongs to the methyltransferase superfamily. RsmC family. As to quaternary structure, monomer.

It localises to the cytoplasm. It catalyses the reaction guanosine(1207) in 16S rRNA + S-adenosyl-L-methionine = N(2)-methylguanosine(1207) in 16S rRNA + S-adenosyl-L-homocysteine + H(+). In terms of biological role, specifically methylates the guanine in position 1207 of 16S rRNA in the 30S particle. This Psychromonas ingrahamii (strain DSM 17664 / CCUG 51855 / 37) protein is Ribosomal RNA small subunit methyltransferase C.